We begin with the raw amino-acid sequence, 251 residues long: Imidazole glycerol phosphate synthase subunit HisF (251 aa).

Residues Asp12 and Asp131 contribute to the active site.

The protein belongs to the HisA/HisF family. Heterodimer of HisH and HisF.

Its subcellular location is the cytoplasm. The enzyme catalyses 5-[(5-phospho-1-deoxy-D-ribulos-1-ylimino)methylamino]-1-(5-phospho-beta-D-ribosyl)imidazole-4-carboxamide + L-glutamine = D-erythro-1-(imidazol-4-yl)glycerol 3-phosphate + 5-amino-1-(5-phospho-beta-D-ribosyl)imidazole-4-carboxamide + L-glutamate + H(+). Its pathway is amino-acid biosynthesis; L-histidine biosynthesis; L-histidine from 5-phospho-alpha-D-ribose 1-diphosphate: step 5/9. IGPS catalyzes the conversion of PRFAR and glutamine to IGP, AICAR and glutamate. The HisF subunit catalyzes the cyclization activity that produces IGP and AICAR from PRFAR using the ammonia provided by the HisH subunit. The chain is Imidazole glycerol phosphate synthase subunit HisF from Streptomyces griseus subsp. griseus (strain JCM 4626 / CBS 651.72 / NBRC 13350 / KCC S-0626 / ISP 5235).